A 600-amino-acid polypeptide reads, in one-letter code: Nisin transport ATP-binding protein NisT (600 aa).

Transmembrane regions (helical) follow at residues 34–54 (AIYLIVLNAITAFVPLASLFI), 69–89 (LINIIIIYFIVQVITTVLGQL), 147–167 (AIIVELSSFISLLSSLFFIGT), 168–188 (WNIGVAILLLIVPVLSLVLFL), and 260–280 (IFLDFILNLINILTIFAMILS). An ABC transmembrane type-1 domain is found at 34-317 (AIYLIVLNAI…MIQNIYIIYN (284 aa)). The ABC transporter domain occupies 352–592 (VKVINLSYVY…CQYYQELYYS (241 aa)). 386–393 (GKNGSGKS) contacts ATP.

Belongs to the ABC transporter superfamily. Nisin exporter (TC 3.A.1.111.3) family.

It localises to the cell membrane. In terms of biological role, probably implicated in the export process of the lantibiotic nisin. The sequence is that of Nisin transport ATP-binding protein NisT (nisT) from Lactococcus lactis subsp. lactis (Streptococcus lactis).